The primary structure comprises 122 residues: Thioredoxin H-type (122 aa).

In terms of domain architecture, Thioredoxin spans 2 to 118 (AAEEGVVIAC…IVKHVGATAA (117 aa)). A disulfide bond links cysteine 40 and cysteine 43.

Its subcellular location is the cytoplasm. Its function is as follows. Participates in various redox reactions through the reversible oxidation of the active center dithiol to a disulfide. The H form is known to activate a number of cytosolic enzymes. The sequence is that of Thioredoxin H-type (TRXH) from Oryza sativa subsp. indica (Rice).